The following is a 235-amino-acid chain: Mediator of RNA polymerase II transcription subunit 7 (235 aa).

Belongs to the Mediator complex subunit 7 family. As to quaternary structure, component of the Mediator complex.

Its subcellular location is the nucleus. Component of the Mediator complex, a coactivator involved in the regulated transcription of nearly all RNA polymerase II-dependent genes. Mediator functions as a bridge to convey information from gene-specific regulatory proteins to the basal RNA polymerase II transcription machinery. Mediator is recruited to promoters by direct interactions with regulatory proteins and serves as a scaffold for the assembly of a functional preinitiation complex with RNA polymerase II and the general transcription factors. The protein is Mediator of RNA polymerase II transcription subunit 7 (MED7) of Yarrowia lipolytica (strain CLIB 122 / E 150) (Yeast).